Consider the following 244-residue polypeptide: MSFEGKIALVTGASRGIGRAIAETLVARGAKVIGTATSENGAKNISDYLGANGKGLMLNVTDPASIESVLENIRAEFGEVDILVNNAGITRDNLLMRMKDDEWNDIIETNLSSVFRLSKAVMRAMMKKRCGRIITIGSVVGTMGNAGQANYAAAKAGLIGFSKSLAREVASRGITVNVVAPGFIETDMTRALSDDQRAGILAQVPAGRLGGAQEIASAVAFLASDEASYITGETLHVNGGMYMV.

Residues 12–15 and T37 each bind NADP(+); that span reads GASR. Residues G50 and G53 each coordinate Ca(2+). Residues 59-60 and N86 each bind NADP(+); that span reads NV. Residue S138 coordinates substrate. Position 145 (N145) interacts with Ca(2+). Y151 (proton acceptor) is an active-site residue. Residues 151–155 and I184 contribute to the NADP(+) site; that span reads YAAAK. 2 residues coordinate Ca(2+): E233 and T234.

This sequence belongs to the short-chain dehydrogenases/reductases (SDR) family. Homotetramer.

It catalyses the reaction a (3R)-hydroxyacyl-[ACP] + NADP(+) = a 3-oxoacyl-[ACP] + NADPH + H(+). It functions in the pathway lipid metabolism; fatty acid biosynthesis. Catalyzes the NADPH-dependent reduction of beta-ketoacyl-ACP substrates to beta-hydroxyacyl-ACP products, the first reductive step in the elongation cycle of fatty acid biosynthesis. The chain is 3-oxoacyl-[acyl-carrier-protein] reductase FabG (fabG) from Salmonella typhi.